The chain runs to 211 residues: Large ribosomal subunit protein uL4 (211 aa).

Positions 40–80 (QQAHSRQGTASTLTRSEVRGGGRKPYKQKGTGRARQGSIRT) are disordered. Over residues 41 to 54 (QAHSRQGTASTLTR) the composition is skewed to polar residues. The span at 60-71 (GGRKPYKQKGTG) shows a compositional bias: basic residues.

Belongs to the universal ribosomal protein uL4 family. Part of the 50S ribosomal subunit.

In terms of biological role, one of the primary rRNA binding proteins, this protein initially binds near the 5'-end of the 23S rRNA. It is important during the early stages of 50S assembly. It makes multiple contacts with different domains of the 23S rRNA in the assembled 50S subunit and ribosome. Its function is as follows. Forms part of the polypeptide exit tunnel. The protein is Large ribosomal subunit protein uL4 of Prochlorococcus marinus (strain MIT 9211).